The sequence spans 544 residues: O-phosphoserine--tRNA(Cys) ligase (544 aa).

Substrate is bound by residues 194-196, 239-241, 281-282, and Asn335; these read HMT, SAS, and YY.

Belongs to the class-II aminoacyl-tRNA synthetase family. O-phosphoseryl-tRNA(Cys) synthetase subfamily. Homotetramer. Interacts with SepCysS.

It carries out the reaction tRNA(Cys) + O-phospho-L-serine + ATP = O-phospho-L-seryl-tRNA(Cys) + AMP + diphosphate. Catalyzes the attachment of O-phosphoserine (Sep) to tRNA(Cys). This is O-phosphoserine--tRNA(Cys) ligase from Methanopyrus kandleri (strain AV19 / DSM 6324 / JCM 9639 / NBRC 100938).